The chain runs to 550 residues: Cochlin (550 aa).

The signal sequence occupies residues M1–S24. The 94-residue stretch at V28–F121 folds into the LCCL domain. Cystine bridges form between C34–C50 and C54–C74. N100 carries an N-linked (GlcNAc...) asparagine glycan. The span at S128–S139 shows a compositional bias: polar residues. The tract at residues S128–G158 is disordered. VWFA domains follow at residues D165–L350 and N367–V537. 2 N-linked (GlcNAc...) asparagine glycosylation sites follow: N221 and N436.

As to quaternary structure, monomer. May form homodimer. Interacts with type II collagen. Interacts with SLC44A2. Interacts with ANXA2. Post-translationally, N-glycosylated.

The protein resides in the secreted. It localises to the extracellular space. Functionally, plays a role in the control of cell shape and motility in the trabecular meshwork. This chain is Cochlin (COCH), found in Bos taurus (Bovine).